Here is a 74-residue protein sequence, read N- to C-terminus: Small ribosomal subunit protein bS18 (74 aa).

It belongs to the bacterial ribosomal protein bS18 family. As to quaternary structure, part of the 30S ribosomal subunit. Forms a tight heterodimer with protein bS6.

Functionally, binds as a heterodimer with protein bS6 to the central domain of the 16S rRNA, where it helps stabilize the platform of the 30S subunit. The sequence is that of Small ribosomal subunit protein bS18 from Zymomonas mobilis subsp. mobilis (strain ATCC 31821 / ZM4 / CP4).